A 283-amino-acid polypeptide reads, in one-letter code: Galactooligosaccharides transport system permease protein GanQ (283 aa).

The next 6 membrane-spanning stretches (helical) occupy residues 13–33 (LLFS…PLLW), 82–102 (ISLF…YAFS), 115–135 (LFLL…FVLA), 137–157 (ILGM…GLIP), 188–208 (IFFQ…AMNG), and 248–268 (TTFA…FIML). Residues 76 to 268 (YVNSMKISLF…IPVAVIFIML (193 aa)) form the ABC transmembrane type-1 domain.

It belongs to the binding-protein-dependent transport system permease family. In terms of assembly, the complex is composed of two ATP-binding proteins (MsmX), two transmembrane proteins (GanP and GanQ) and a solute-binding protein (GanS).

The protein resides in the cell membrane. Its function is as follows. Involved in galactan degradation. Part of the ABC transporter complex GanPQS involved in the uptake of galactooligosaccharides. Responsible for the translocation of the substrate across the membrane. This chain is Galactooligosaccharides transport system permease protein GanQ (ganQ), found in Bacillus subtilis (strain 168).